A 318-amino-acid polypeptide reads, in one-letter code: Beta-ketoacyl-[acyl-carrier-protein] synthase III (318 aa).

Active-site residues include Cys112 and His245. An ACP-binding region spans residues 246 to 250 (QANIR). The active site involves Asn275.

The protein belongs to the thiolase-like superfamily. FabH family. Homodimer.

Its subcellular location is the cytoplasm. It catalyses the reaction malonyl-[ACP] + acetyl-CoA + H(+) = 3-oxobutanoyl-[ACP] + CO2 + CoA. It participates in lipid metabolism; fatty acid biosynthesis. In terms of biological role, catalyzes the condensation reaction of fatty acid synthesis by the addition to an acyl acceptor of two carbons from malonyl-ACP. Catalyzes the first condensation reaction which initiates fatty acid synthesis and may therefore play a role in governing the total rate of fatty acid production. Possesses both acetoacetyl-ACP synthase and acetyl transacylase activities. Its substrate specificity determines the biosynthesis of branched-chain and/or straight-chain of fatty acids. The polypeptide is Beta-ketoacyl-[acyl-carrier-protein] synthase III (Nitrosomonas europaea (strain ATCC 19718 / CIP 103999 / KCTC 2705 / NBRC 14298)).